Here is a 407-residue protein sequence, read N- to C-terminus: Protease ElaD (407 aa).

H231 is an active-site residue. C317 functions as the Nucleophile in the catalytic mechanism.

It belongs to the peptidase C79 family.

In terms of biological role, protease that can act as an efficient and specific deubiquitinating enzyme in vitro. Does not possess desumoylating and deneddylating activities. The physiological substrate is unknown. The protein is Protease ElaD (elaD) of Escherichia coli O157:H7.